Consider the following 368-residue polypeptide: tRNA(Met) cytidine acetate ligase (368 aa).

ATP-binding positions include 7 to 20, Gly96, Asn152, and Arg175; that span reads IAEF…HKYL.

The protein belongs to the TmcAL family.

The protein resides in the cytoplasm. The enzyme catalyses cytidine(34) in elongator tRNA(Met) + acetate + ATP = N(4)-acetylcytidine(34) in elongator tRNA(Met) + AMP + diphosphate. Catalyzes the formation of N(4)-acetylcytidine (ac(4)C) at the wobble position of elongator tRNA(Met), using acetate and ATP as substrates. First activates an acetate ion to form acetyladenylate (Ac-AMP) and then transfers the acetyl group to tRNA to form ac(4)C34. This Streptococcus pyogenes serotype M5 (strain Manfredo) protein is tRNA(Met) cytidine acetate ligase.